The primary structure comprises 230 residues: 5'-methylthioadenosine/S-adenosylhomocysteine nucleosidase (230 aa).

Glutamate 12 acts as the Proton acceptor in catalysis. Substrate-binding positions include glycine 78, isoleucine 153, and 174–175 (ME). The Proton donor role is filled by aspartate 198.

It belongs to the PNP/UDP phosphorylase family. MtnN subfamily.

The enzyme catalyses S-adenosyl-L-homocysteine + H2O = S-(5-deoxy-D-ribos-5-yl)-L-homocysteine + adenine. It carries out the reaction S-methyl-5'-thioadenosine + H2O = 5-(methylsulfanyl)-D-ribose + adenine. The catalysed reaction is 5'-deoxyadenosine + H2O = 5-deoxy-D-ribose + adenine. It functions in the pathway amino-acid biosynthesis; L-methionine biosynthesis via salvage pathway; S-methyl-5-thio-alpha-D-ribose 1-phosphate from S-methyl-5'-thioadenosine (hydrolase route): step 1/2. Catalyzes the irreversible cleavage of the glycosidic bond in both 5'-methylthioadenosine (MTA) and S-adenosylhomocysteine (SAH/AdoHcy) to adenine and the corresponding thioribose, 5'-methylthioribose and S-ribosylhomocysteine, respectively. Also cleaves 5'-deoxyadenosine, a toxic by-product of radical S-adenosylmethionine (SAM) enzymes, into 5-deoxyribose and adenine. The chain is 5'-methylthioadenosine/S-adenosylhomocysteine nucleosidase from Shewanella pealeana (strain ATCC 700345 / ANG-SQ1).